The following is a 361-amino-acid chain: Mannose-1-phosphate guanylyltransferase 1 (361 aa).

GDP-alpha-D-mannose contacts are provided by Leu6 and Val7. The diphosphate site is built by Gly9, Gly11, Thr12, Arg13, and Lys23. GDP-alpha-D-mannose contacts are provided by Gly85, Asn109, Asp111, Gly146, and Asn173.

The protein belongs to the transferase hexapeptide repeat family. As to quaternary structure, interacts in vitro with CSN5A and CSN5B, but in planta only with CSN5B, which targets CYT1 for degradation in the dark by the 26S proteasome. Forms homodimers in the unliganded structure. The product-bound structure is composed of six dimers that form a dodecameric assembly.

Its subcellular location is the cytoplasm. The protein localises to the nucleus. It carries out the reaction alpha-D-mannose 1-phosphate + GTP + H(+) = GDP-alpha-D-mannose + diphosphate. It participates in nucleotide-sugar biosynthesis; GDP-alpha-D-mannose biosynthesis; GDP-alpha-D-mannose from alpha-D-mannose 1-phosphate (GTP route): step 1/1. Essential protein during embryogenesis. Catalyzes a reaction of the Smirnoff-Wheeler pathway, the major route to ascorbate biosynthesis in plants. Plays an essential role in plant growth and development and cell-wall architecture. Provides GDP-mannose, used for cell wall carbohydrate biosynthesis, protein N-glycosylation, as well as for the biosynthesis of the antioxidant ascorbate. The sequence is that of Mannose-1-phosphate guanylyltransferase 1 from Arabidopsis thaliana (Mouse-ear cress).